The sequence spans 177 residues: Large ribosomal subunit protein uL6 (177 aa).

It belongs to the universal ribosomal protein uL6 family. In terms of assembly, part of the 50S ribosomal subunit.

Its function is as follows. This protein binds to the 23S rRNA, and is important in its secondary structure. It is located near the subunit interface in the base of the L7/L12 stalk, and near the tRNA binding site of the peptidyltransferase center. In Hahella chejuensis (strain KCTC 2396), this protein is Large ribosomal subunit protein uL6.